Consider the following 312-residue polypeptide: Pectin lyase (312 aa).

The active site involves arginine 201. The segment at 254–274 is disordered; the sequence is GSGTFTDTNSVPPITNQKSPK. Polar residues predominate over residues 256–274; that stretch reads GTFTDTNSVPPITNQKSPK.

The protein belongs to the polysaccharide lyase 1 family.

The enzyme catalyses Eliminative cleavage of (1-&gt;4)-alpha-D-galacturonan methyl ester to give oligosaccharides with 4-deoxy-6-O-methyl-alpha-D-galact-4-enuronosyl groups at their non-reducing ends.. The polypeptide is Pectin lyase (pnl) (Pseudomonas marginalis (Pseudomonas panacis)).